The chain runs to 396 residues: MSEYSLFTSESVSEGHPDKIADQISDAVLDAIIAEDKYARVACETLVKTGVAIIAGEVSTSAWVDLEDIVRNVILDIGYNSSDVGFDGATCGVMNIIGKQSVDIAQGVDRSKPEDQGAGDQGLMFGYASNETDVLMPAPITFSHQLVQRQAEARKSGLLPWLRPDAKSQVTCRYENGKVVGVDAIVLSTQHNPDVSYKDLREGVMELIVKHVIPAHLLHKDTQFHINPTGNFIIGGPVGDCGLTGRKIIVDTYGGMARHGGGAFSGKDPSKVDRSAAYAGRYVAKNIVAAGLAERCEIQVSYAIGVAQPTSISLNTFGTGKLSDDKIIKLVRDNFDLRPYAITTMLDLLHPMYQATAAYGHFGRIPVEMTVGDDTFTAFTWEKTDRADALRAAAGL.

ATP is bound at residue His16. Mg(2+) is bound at residue Asp18. A K(+)-binding site is contributed by Glu44. L-methionine is bound by residues Glu57 and Gln100. Residues 100–110 (QSVDIAQGVDR) are flexible loop. ATP is bound by residues 165-167 (DAK), Asp240, 246-247 (RK), Ala263, and Lys267. Position 240 (Asp240) interacts with L-methionine. Lys271 provides a ligand contact to L-methionine.

Belongs to the AdoMet synthase family. As to quaternary structure, homotetramer; dimer of dimers. Requires Mg(2+) as cofactor. The cofactor is K(+).

It is found in the cytoplasm. The catalysed reaction is L-methionine + ATP + H2O = S-adenosyl-L-methionine + phosphate + diphosphate. The protein operates within amino-acid biosynthesis; S-adenosyl-L-methionine biosynthesis; S-adenosyl-L-methionine from L-methionine: step 1/1. In terms of biological role, catalyzes the formation of S-adenosylmethionine (AdoMet) from methionine and ATP. The overall synthetic reaction is composed of two sequential steps, AdoMet formation and the subsequent tripolyphosphate hydrolysis which occurs prior to release of AdoMet from the enzyme. The sequence is that of S-adenosylmethionine synthase from Pseudomonas syringae pv. syringae (strain B728a).